Consider the following 468-residue polypeptide: Mitochondrial distribution and morphology protein 10 (468 aa).

Positions 370-386 are enriched in basic and acidic residues; that stretch reads ERDGLPGIQRDDHDMHH. Residues 370-394 are disordered; it reads ERDGLPGIQRDDHDMHHHPQRPHAS.

It belongs to the MDM10 family. Component of the ER-mitochondria encounter structure (ERMES) or MDM complex, composed of MMM1, MDM10, MDM12 and MDM34. Associates with the mitochondrial outer membrane sorting assembly machinery SAM(core) complex.

The protein localises to the mitochondrion outer membrane. In terms of biological role, component of the ERMES/MDM complex, which serves as a molecular tether to connect the endoplasmic reticulum and mitochondria. Components of this complex are involved in the control of mitochondrial shape and protein biogenesis and may function in phospholipid exchange. MDM10 is involved in the late assembly steps of the general translocase of the mitochondrial outer membrane (TOM complex). Functions in the TOM40-specific route of the assembly of outer membrane beta-barrel proteins, including the association of TOM40 with the receptor TOM22 and small TOM proteins. Can associate with the SAM(core) complex as well as the MDM12-MMM1 complex, both involved in late steps of the major beta-barrel assembly pathway, that is responsible for biogenesis of all outer membrane beta-barrel proteins. May act as a switch that shuttles between both complexes and channels precursor proteins into the TOM40-specific pathway. Plays a role in mitochondrial morphology and in the inheritance of mitochondria. The sequence is that of Mitochondrial distribution and morphology protein 10 from Ajellomyces dermatitidis (strain ER-3 / ATCC MYA-2586) (Blastomyces dermatitidis).